We begin with the raw amino-acid sequence, 74 residues long: UPF0352 protein MS1910 (74 aa).

Belongs to the UPF0352 family.

This is UPF0352 protein MS1910 from Mannheimia succiniciproducens (strain KCTC 0769BP / MBEL55E).